The chain runs to 64 residues: Large ribosomal subunit protein bL35 (64 aa).

Residues 1 to 24 (MPKMKSHRGACKRFKKTASGKVKR) are compositionally biased toward basic residues. A disordered region spans residues 1–64 (MPKMKSHRGA…EKQIKRMILA (64 aa)). The segment covering 25–35 (ERMYGSHNLEK) has biased composition (basic and acidic residues). Positions 36–45 (KNRKRTRRLH) are enriched in basic residues.

This sequence belongs to the bacterial ribosomal protein bL35 family.

The polypeptide is Large ribosomal subunit protein bL35 (Prosthecochloris aestuarii (strain DSM 271 / SK 413)).